Consider the following 24-residue polypeptide: Heat shock 70 kDa protein 4L (24 aa).

T19 is modified (phosphothreonine).

Belongs to the heat shock protein 70 family. Homodimer. In the testis, forms a complex with p53 at 32.5 degrees Celsius which is scrotal temperature but not at 37 or 42 degrees Celsius. In terms of tissue distribution, expressed at high levels in testis and at much lower levels in brain. In testis, expressed mainly in germ cells. Widespread in brain with highest expression in cerebellum and medulla oblongata. Also expressed in renal medulla of water-restricted animals.

The protein localises to the cytoplasm. Its subcellular location is the nucleus. In terms of biological role, possesses chaperone activity in vitro where it inhibits aggregation of citrate synthase. This chain is Heat shock 70 kDa protein 4L (Hspa4l), found in Rattus norvegicus (Rat).